The sequence spans 419 residues: Maltoporin 2 (419 aa).

An N-terminal signal peptide occupies residues 1–23; it reads MKTSLRTLSVALAAALVSPSVLA.

Belongs to the porin LamB (TC 1.B.3) family. Homotrimer formed of three 18-stranded antiparallel beta-barrels, containing three independent channels.

It localises to the cell outer membrane. The catalysed reaction is beta-maltose(in) = beta-maltose(out). In terms of biological role, involved in the transport of maltose and maltodextrins. The chain is Maltoporin 2 from Yersinia pestis bv. Antiqua (strain Antiqua).